Here is a 217-residue protein sequence, read N- to C-terminus: Probable transaldolase (217 aa).

Residue K83 is the Schiff-base intermediate with substrate of the active site.

It belongs to the transaldolase family. Type 3B subfamily.

It localises to the cytoplasm. It carries out the reaction D-sedoheptulose 7-phosphate + D-glyceraldehyde 3-phosphate = D-erythrose 4-phosphate + beta-D-fructose 6-phosphate. It participates in carbohydrate degradation; pentose phosphate pathway; D-glyceraldehyde 3-phosphate and beta-D-fructose 6-phosphate from D-ribose 5-phosphate and D-xylulose 5-phosphate (non-oxidative stage): step 2/3. Its function is as follows. Transaldolase is important for the balance of metabolites in the pentose-phosphate pathway. The protein is Probable transaldolase (tal) of Methanocaldococcus jannaschii (strain ATCC 43067 / DSM 2661 / JAL-1 / JCM 10045 / NBRC 100440) (Methanococcus jannaschii).